The chain runs to 177 residues: Shikimate kinase (177 aa).

14–19 (GSGKST) provides a ligand contact to ATP. Position 18 (S18) interacts with Mg(2+). Substrate contacts are provided by D36, R60, and G82. Residue R120 participates in ATP binding. R139 provides a ligand contact to substrate.

The protein belongs to the shikimate kinase family. In terms of assembly, monomer. It depends on Mg(2+) as a cofactor.

The protein resides in the cytoplasm. It catalyses the reaction shikimate + ATP = 3-phosphoshikimate + ADP + H(+). The protein operates within metabolic intermediate biosynthesis; chorismate biosynthesis; chorismate from D-erythrose 4-phosphate and phosphoenolpyruvate: step 5/7. In terms of biological role, catalyzes the specific phosphorylation of the 3-hydroxyl group of shikimic acid using ATP as a cosubstrate. This chain is Shikimate kinase, found in Gloeobacter violaceus (strain ATCC 29082 / PCC 7421).